The chain runs to 417 residues: MLLPVPLLLGLVGLAAAEPTIYFKEQFLDGDGWTDRWIESKHKPDFGRFVLSSGKFYGDQEKDKGLQTSQDARFYALSARFEPFSNKGQTLVVQFTVKHEQNIDCGGGYVKLFPDGLDQTDMHGDSEYNIMFGPDICGPGTKKVHVIFNYKGKNVLINKDIRCKDDEFTHLYTLIVRPDNTYEVKIDNSQVESGSLEDDWDFLPPKKIKDPDAVKPEDWDERAKIDDPTDSKPEDWDKPEHIPDPDAKKPEDWDEEMDGEWEPPVIQNPEYKGEWKPRQIDNPDYKGTWIHPEIDNPEYSPDSNIYAYENFAVLGLDLWQVKSGTIFDNFLITNDEAYAEEFGNETWGVTKAAEKQMKDKQDEEQRLKEEEEEKKRKEEEEVDKEDEEDKDEDEEEEDEKEEEEEEDAAAGQAKDEL.

The signal sequence occupies residues 1–17 (MLLPVPLLLGLVGLAAA). The segment at 18–197 (EPTIYFKEQF…NSQVESGSLE (180 aa)) is N-domain. Ca(2+)-binding residues include Q26, K62, and K64. K64 is modified (N6-(2-hydroxyisobutyryl)lysine). An alpha-D-glucoside is bound by residues Y109, K111, Y128, and D135. A disulfide bond links C137 and C163. An N6-acetyllysine modification is found at K159. The 1-1 repeat unit spans residues 191-202 (VESGSLEDDWDF). Residues 191–255 (VESGSLEDDW…DAKKPEDWDE (65 aa)) are 4 X approximate repeats. Residues 193–277 (SGSLEDDWDF…NPEYKGEWKP (85 aa)) form a disordered region. The interval 198–308 (DDWDFLPPKK…YSPDSNIYAY (111 aa)) is P-domain. The segment covering 207 to 251 (KIKDPDAVKPEDWDERAKIDDPTDSKPEDWDKPEHIPDPDAKKPE) has biased composition (basic and acidic residues). Residue K209 is modified to N6-acetyllysine. A run of 6 repeats spans residues 210–221 (DPDAVKPEDWDE), 227–238 (DPTDSKPEDWDK), 244–255 (DPDAKKPEDWDE), 259–269 (GEWEPPVIQNP), 273–283 (GEWKPRQIDNP), and 287–297 (GTWIHPEIDNP). Residues 237–270 (DKPEHIPDPDAKKPEDWDEEMDGEWEPPVIQNPE) form an interaction with PPIB region. Over residues 252–261 (DWDEEMDGEW) the composition is skewed to acidic residues. The interval 259 to 297 (GEWEPPVIQNPEYKGEWKPRQIDNPDYKGTWIHPEIDNP) is 3 X approximate repeats. A C-domain region spans residues 309-417 (ENFAVLGLDL…AAAGQAKDEL (109 aa)). Residue D317 participates in an alpha-D-glucoside binding. D328 contributes to the Ca(2+) binding site. A disordered region spans residues 350 to 417 (TKAAEKQMKD…AAAGQAKDEL (68 aa)). Over residues 352–379 (AAEKQMKDKQDEEQRLKEEEEEKKRKEE) the composition is skewed to basic and acidic residues. Over residues 380-408 (EEVDKEDEEDKDEDEEEEDEKEEEEEEDA) the composition is skewed to acidic residues. Positions 414-417 (KDEL) match the Prevents secretion from ER motif.

Belongs to the calreticulin family. In terms of assembly, monomer. Component of an EIF2 complex at least composed of CELF1/CUGBP1, CALR, CALR3, EIF2S1, EIF2S2, HSP90B1 and HSPA5. Interacts with PDIA3/ERp57 and SPACA9. Interacts with TRIM21. Interacts with NR3C1. Interacts with PPIB. Interacts (via P-domain) with PDIA5. Interacts with CLCC1. In blastocyst expressed in all blastomeres (at protein level). In embryos, expressed in spleen, kidney, liver, fat, muscle, ovary, granulosa cells and cumulus cells.

Its subcellular location is the endoplasmic reticulum lumen. The protein localises to the cytoplasm. The protein resides in the cytosol. It is found in the secreted. It localises to the extracellular space. Its subcellular location is the extracellular matrix. The protein localises to the cell surface. The protein resides in the sarcoplasmic reticulum lumen. It is found in the cytoplasmic vesicle. It localises to the secretory vesicle. Its subcellular location is the cortical granule. The protein localises to the cytolytic granule. In terms of biological role, calcium-binding chaperone that promotes folding, oligomeric assembly and quality control in the endoplasmic reticulum (ER) via the calreticulin/calnexin cycle. This lectin interacts transiently with almost all of the monoglucosylated glycoproteins that are synthesized in the ER. Interacts with the DNA-binding domain of NR3C1 and mediates its nuclear export. Involved in maternal gene expression regulation. May participate in oocyte maturation via the regulation of calcium homeostasis. Present in the cortical granules of non-activated oocytes, is exocytosed during the cortical reaction in response to oocyte activation and might participate in the block to polyspermy. This Sus scrofa (Pig) protein is Calreticulin (CALR).